A 490-amino-acid chain; its full sequence is Katanin p60 ATPase-containing subunit A-like 1 (490 aa).

An N-acetylmethionine modification is found at methionine 1. The interval 96-182 (PAVWPPPVPA…ASDGEIPKFD (87 aa)) is disordered. Residues 116-127 (PNREVRPLRKEM) show a composition bias toward basic and acidic residues. The segment covering 128 to 139 (AGVGARGPVGRA) has biased composition (low complexity). Basic and acidic residues predominate over residues 143-169 (SKSEKPSASRDKDCRARGRDDKGRKNM). Serine 174 carries the post-translational modification Phosphoserine. ATP is bound at residue 248–255 (GPPGTGKT).

It belongs to the AAA ATPase family. Katanin p60 subunit A1 subfamily. A-like 1 sub-subfamily. Interacts with KATNB1 and KATNBL1.

Its subcellular location is the cytoplasm. The protein resides in the cytoskeleton. It localises to the spindle pole. It is found in the spindle. It carries out the reaction n ATP + n H2O + a microtubule = n ADP + n phosphate + (n+1) alpha/beta tubulin heterodimers.. In terms of biological role, regulates microtubule dynamics in Sertoli cells, a process that is essential for spermiogenesis and male fertility. Severs microtubules in an ATP-dependent manner, promoting rapid reorganization of cellular microtubule arrays. Has microtubule-severing activity in vitro. The protein is Katanin p60 ATPase-containing subunit A-like 1 of Oryctolagus cuniculus (Rabbit).